We begin with the raw amino-acid sequence, 422 residues long: UDP-N-acetylglucosamine 1-carboxyvinyltransferase (422 aa).

Position 23 to 24 (Lys-23 to Asn-24) interacts with phosphoenolpyruvate. Arg-92 is a binding site for UDP-N-acetyl-alpha-D-glucosamine. Cys-116 serves as the catalytic Proton donor. A 2-(S-cysteinyl)pyruvic acid O-phosphothioketal modification is found at Cys-116. Residues Arg-121 to Leu-125, Lys-161 to Val-164, Asp-306, and Ile-328 contribute to the UDP-N-acetyl-alpha-D-glucosamine site.

Belongs to the EPSP synthase family. MurA subfamily.

Its subcellular location is the cytoplasm. It carries out the reaction phosphoenolpyruvate + UDP-N-acetyl-alpha-D-glucosamine = UDP-N-acetyl-3-O-(1-carboxyvinyl)-alpha-D-glucosamine + phosphate. Its pathway is cell wall biogenesis; peptidoglycan biosynthesis. In terms of biological role, cell wall formation. Adds enolpyruvyl to UDP-N-acetylglucosamine. In Aliivibrio salmonicida (strain LFI1238) (Vibrio salmonicida (strain LFI1238)), this protein is UDP-N-acetylglucosamine 1-carboxyvinyltransferase.